The following is a 336-amino-acid chain: Glycerol-3-phosphate dehydrogenase [NAD(P)+] (336 aa).

Positions 16, 17, 37, and 111 each coordinate NADPH. 3 residues coordinate sn-glycerol 3-phosphate: K111, G140, and T142. Residue A144 coordinates NADPH. Residues K196, D249, S259, R260, and N261 each contribute to the sn-glycerol 3-phosphate site. K196 (proton acceptor) is an active-site residue. R260 serves as a coordination point for NADPH. NADPH-binding residues include V284 and E286.

Belongs to the NAD-dependent glycerol-3-phosphate dehydrogenase family.

Its subcellular location is the cytoplasm. It catalyses the reaction sn-glycerol 3-phosphate + NAD(+) = dihydroxyacetone phosphate + NADH + H(+). The enzyme catalyses sn-glycerol 3-phosphate + NADP(+) = dihydroxyacetone phosphate + NADPH + H(+). It functions in the pathway membrane lipid metabolism; glycerophospholipid metabolism. Functionally, catalyzes the reduction of the glycolytic intermediate dihydroxyacetone phosphate (DHAP) to sn-glycerol 3-phosphate (G3P), the key precursor for phospholipid synthesis. In Actinobacillus pleuropneumoniae serotype 5b (strain L20), this protein is Glycerol-3-phosphate dehydrogenase [NAD(P)+].